The primary structure comprises 543 residues: Chaperonin GroEL 2 (543 aa).

ATP-binding positions include 29-32, 86-90, G413, 479-481, and D495; these read TLGP, DGTTT, and NAA.

Belongs to the chaperonin (HSP60) family. Forms a cylinder of 14 subunits composed of two heptameric rings stacked back-to-back. Interacts with the co-chaperonin GroES.

It localises to the cytoplasm. The enzyme catalyses ATP + H2O + a folded polypeptide = ADP + phosphate + an unfolded polypeptide.. Together with its co-chaperonin GroES, plays an essential role in assisting protein folding. The GroEL-GroES system forms a nano-cage that allows encapsulation of the non-native substrate proteins and provides a physical environment optimized to promote and accelerate protein folding. This Synechococcus sp. (strain CC9311) protein is Chaperonin GroEL 2.